Reading from the N-terminus, the 360-residue chain is Phospho-N-acetylmuramoyl-pentapeptide-transferase (360 aa).

10 helical membrane-spanning segments follow: residues 26-46 (AILGLLTALVFSLWFGPKLIE), 74-94 (MGGLLILAAIFISVLLWGDLG), 97-117 (YVWVMLFVLGSFGLIGFIDDY), 134-154 (YILQSLAALLIAFFLYATAAN), 168-188 (VMPQLGAVFIVLAYFTIVGSS), 199-219 (GLAIMPTVMVAAAFALIAYLS), 236-256 (SGELVIVCTAIVGAGLGFLWF), 263-283 (VFMGDVGSLSLGAALGTIAVL), 288-308 (ILLVIMGGVFVMETLSVILQV), and 338-358 (VIVRFWIISIFLVLLGLATLK).

Belongs to the glycosyltransferase 4 family. MraY subfamily. Requires Mg(2+) as cofactor.

The protein resides in the cell inner membrane. The enzyme catalyses UDP-N-acetyl-alpha-D-muramoyl-L-alanyl-gamma-D-glutamyl-meso-2,6-diaminopimeloyl-D-alanyl-D-alanine + di-trans,octa-cis-undecaprenyl phosphate = di-trans,octa-cis-undecaprenyl diphospho-N-acetyl-alpha-D-muramoyl-L-alanyl-D-glutamyl-meso-2,6-diaminopimeloyl-D-alanyl-D-alanine + UMP. Its pathway is cell wall biogenesis; peptidoglycan biosynthesis. Functionally, catalyzes the initial step of the lipid cycle reactions in the biosynthesis of the cell wall peptidoglycan: transfers peptidoglycan precursor phospho-MurNAc-pentapeptide from UDP-MurNAc-pentapeptide onto the lipid carrier undecaprenyl phosphate, yielding undecaprenyl-pyrophosphoryl-MurNAc-pentapeptide, known as lipid I. The protein is Phospho-N-acetylmuramoyl-pentapeptide-transferase of Shewanella baltica (strain OS195).